A 301-amino-acid chain; its full sequence is Methionine aminopeptidase (301 aa).

Histidine 65 contacts substrate. 3 residues coordinate a divalent metal cation: aspartate 85, aspartate 96, and histidine 156. Histidine 164 is a binding site for substrate. 2 residues coordinate a divalent metal cation: glutamate 189 and glutamate 284.

Belongs to the peptidase M24A family. Methionine aminopeptidase archaeal type 2 subfamily. Monomer. Co(2+) is required as a cofactor. The cofactor is Zn(2+). Mn(2+) serves as cofactor. It depends on Fe(2+) as a cofactor.

It catalyses the reaction Release of N-terminal amino acids, preferentially methionine, from peptides and arylamides.. Removes the N-terminal methionine from nascent proteins. The N-terminal methionine is often cleaved when the second residue in the primary sequence is small and uncharged (Met-Ala-, Cys, Gly, Pro, Ser, Thr, or Val). The polypeptide is Methionine aminopeptidase (Saccharolobus solfataricus (strain ATCC 35092 / DSM 1617 / JCM 11322 / P2) (Sulfolobus solfataricus)).